We begin with the raw amino-acid sequence, 481 residues long: Beta-amyrin 28-monooxygenase (481 aa).

The chain crosses the membrane as a helical span at residues 4 to 24 (FYVPLLSLFVLFISLSFHFLF). Cysteine 428 contacts heme.

It belongs to the cytochrome P450 family. The cofactor is heme. In terms of tissue distribution, mostly expressed in roots, and, to a lower extent, in stems and leaves. Accumulates only in the rhizome of plants.

Its subcellular location is the membrane. The catalysed reaction is beta-amyrin + 3 reduced [NADPH--hemoprotein reductase] + 3 O2 = oleanolate + 3 oxidized [NADPH--hemoprotein reductase] + 4 H2O + 4 H(+). Its pathway is secondary metabolite biosynthesis; terpenoid biosynthesis. In terms of biological role, component of the oleanane-type triterpene saponins (e.g. ginsenosides or panaxosides) biosynthetic pathway. Catalyzes the carboxylation of beta-amyrin at the C-28 position to form oleanolic acid during ginsenoside biosynthesis, a class of tetracyclic triterpenoid saponins. This chain is Beta-amyrin 28-monooxygenase, found in Panax ginseng (Korean ginseng).